Consider the following 349-residue polypeptide: Hydroxymethylglutaryl-CoA synthase (349 aa).

The (3S)-3-hydroxy-3-methylglutaryl-CoA site is built by aspartate 30 and alanine 31. Catalysis depends on glutamate 82, which acts as the Proton donor/acceptor. (3S)-3-hydroxy-3-methylglutaryl-CoA-binding residues include cysteine 114 and threonine 155. Catalysis depends on cysteine 114, which acts as the Acyl-thioester intermediate. Arginine 203 is a binding site for CoA. Residues threonine 205 and histidine 238 each contribute to the (3S)-3-hydroxy-3-methylglutaryl-CoA site. The active-site Proton donor/acceptor is histidine 238. A CoA-binding site is contributed by lysine 243. (3S)-3-hydroxy-3-methylglutaryl-CoA-binding residues include asparagine 270 and serine 300.

Belongs to the thiolase-like superfamily. Archaeal HMG-CoA synthase family. As to quaternary structure, interacts with acetoacetyl-CoA thiolase that catalyzes the precedent step in the pathway and with a DUF35 protein. The acetoacetyl-CoA thiolase/HMG-CoA synthase complex channels the intermediate via a fused CoA-binding site, which allows for efficient coupling of the endergonic thiolase reaction with the exergonic HMGCS reaction.

The enzyme catalyses acetoacetyl-CoA + acetyl-CoA + H2O = (3S)-3-hydroxy-3-methylglutaryl-CoA + CoA + H(+). Its pathway is metabolic intermediate biosynthesis; (R)-mevalonate biosynthesis; (R)-mevalonate from acetyl-CoA: step 2/3. Functionally, catalyzes the condensation of acetyl-CoA with acetoacetyl-CoA to form 3-hydroxy-3-methylglutaryl-CoA (HMG-CoA). Functions in the mevalonate (MVA) pathway leading to isopentenyl diphosphate (IPP), a key precursor for the biosynthesis of isoprenoid compounds that are building blocks of archaeal membrane lipids. This Methanococcus maripaludis (strain DSM 14266 / JCM 13030 / NBRC 101832 / S2 / LL) protein is Hydroxymethylglutaryl-CoA synthase.